A 1530-amino-acid chain; its full sequence is B-cell CLL/lymphoma 9-like protein (1530 aa).

Disordered stretches follow at residues 1–101 (MHSE…VLEP), 155–187 (QGHSGSSTTGHVSDPGGPGLGSGHGPGIRTDLH), 246–353 (HISS…PSVL), 398–439 (SGTG…IGGG), 473–503 (QTQNLGGPGLDDSLMGPHHGMPPHSHHLSSP), 821–1076 (QNGR…QNPL), 1250–1279 (KGMSHQRPPHQPDSFPPMPMGDGPDLSEVI), and 1310–1331 (SETMSQPQQNPHQGQPPPQVSS). Polar residues predominate over residues 8–18 (SNHGKQVTSGA). Positions 19-34 (QSQLPNVNQAQQQAPA) are enriched in low complexity. Residues 81 to 93 (ERSVSIDTGDQRE) are compositionally biased toward basic and acidic residues. A compositionally biased stretch (low complexity) spans 156-165 (GHSGSSTTGH). A compositionally biased stretch (gly residues) spans 170 to 180 (GGPGLGSGHGP). Polar residues-rich tracts occupy residues 247 to 264 (ISSSHSPPIGTPKSQSGT) and 278 to 287 (GTSTPSSTGH). Composition is skewed to low complexity over residues 409 to 426 (GPNGNPNGTNVNNNNSND) and 485 to 503 (SLMGPHHGMPPHSHHLSSP). 3 stretches are compositionally biased toward polar residues: residues 875–891 (LSSTSRLSHIPMNTGSR), 920–930 (QLKSPSLSQEP), and 944–953 (SPSQLPQSGP). 3 stretches are compositionally biased toward low complexity: residues 960 to 971 (AASGAGTPSSTS), 979 to 994 (GPSLGLRSPSGSPGHL), and 1031 to 1060 (SSSTDTGMSLPPRSSNSTPISQPSNSINPS). The span at 1258-1268 (PHQPDSFPPMP) shows a compositional bias: pro residues.

It belongs to the BCL9 family.

It is found in the nucleus. Transcriptional regulator that may act as an activator. Plays a role for mesoderm patterning in early embryogenesis. This is B-cell CLL/lymphoma 9-like protein (bcl9l) from Danio rerio (Zebrafish).